The sequence spans 937 residues: Beta-mannosidase A (937 aa).

The signal sequence occupies residues 1-23; sequence MRALPTTATTLLGVLFFPSASRS. Residues Asn-42, Asn-82, Asn-250, Asn-285, Asn-319, Asn-329, and Asn-350 are each glycosylated (N-linked (GlcNAc...) asparagine). Residue Glu-482 is the Proton donor of the active site. N-linked (GlcNAc...) asparagine glycans are attached at residues Asn-553, Asn-612, Asn-743, and Asn-796.

Belongs to the glycosyl hydrolase 2 family. Beta-mannosidase A subfamily. In terms of assembly, homodimer. N-glycosylated.

It localises to the secreted. The enzyme catalyses Hydrolysis of terminal, non-reducing beta-D-mannose residues in beta-D-mannosides.. Its pathway is glycan metabolism; N-glycan degradation. Its function is as follows. Exoglycosidase that cleaves the single beta-linked mannose residue from the non-reducing end of beta-mannosidic oligosaccharides of various complexity and length. Involved in the degradation of polymeric mannan and galactomannan. Releases the terminal mannose residue from mannotriose and is somewaht less active on other mannooligosaccharides. This Aspergillus aculeatus protein is Beta-mannosidase A (mndA).